An 85-amino-acid chain; its full sequence is Conotoxin Mi15b (85 aa).

A signal peptide spans 1–23; it reads MEKLTVLILVAIVLLTIQVLGQS. Positions 24-49 are excised as a propeptide; sequence DRDKHPKRRPRQYATKRLSALMKGHR. Q50 bears the Pyrrolidone carboxylic acid mark.

Belongs to the conotoxin O2 superfamily. Contains 4 disulfide bonds. In terms of tissue distribution, expressed by the venom duct.

It is found in the secreted. This is Conotoxin Mi15b from Conus miles (Soldier cone).